Reading from the N-terminus, the 165-residue chain is Putative glycine-rich cell wall structural protein 1 (165 aa).

The N-terminal stretch at 1–23 (MARKVIALAFLLLLTISLSKSNA) is a signal peptide. R2; Tyr-rich repeat units lie at residues 56 to 62 (GYGYGYG) and 93 to 99 (GYGYGYG). Residues 105-125 (AQGQGSGGGGGGGGGGGGGGS) are disordered. The stretch at 132 to 138 (GYGYGYG) is one R2; Tyr-rich repeat. Residues 146–165 (GGGGGGGGGGGGSGYVGKHE) are disordered.

It is found in the secreted. The protein localises to the cell wall. Responsible for plasticity of the cell wall. This Oryza sativa subsp. indica (Rice) protein is Putative glycine-rich cell wall structural protein 1 (GRP-1).